We begin with the raw amino-acid sequence, 174 residues long: Peptide methionine sulfoxide reductase MsrA (174 aa).

Residue cysteine 10 is part of the active site.

This sequence belongs to the MsrA Met sulfoxide reductase family.

It catalyses the reaction L-methionyl-[protein] + [thioredoxin]-disulfide + H2O = L-methionyl-(S)-S-oxide-[protein] + [thioredoxin]-dithiol. The enzyme catalyses [thioredoxin]-disulfide + L-methionine + H2O = L-methionine (S)-S-oxide + [thioredoxin]-dithiol. Has an important function as a repair enzyme for proteins that have been inactivated by oxidation. Catalyzes the reversible oxidation-reduction of methionine sulfoxide in proteins to methionine. The protein is Peptide methionine sulfoxide reductase MsrA of Arthrobacter sp. (strain FB24).